A 112-amino-acid chain; its full sequence is Large ribosomal subunit protein bL20c (112 aa).

This sequence belongs to the bacterial ribosomal protein bL20 family.

The protein resides in the plastid. The protein localises to the chloroplast. Its function is as follows. Binds directly to 23S ribosomal RNA and is necessary for the in vitro assembly process of the 50S ribosomal subunit. It is not involved in the protein synthesizing functions of that subunit. The protein is Large ribosomal subunit protein bL20c (rpl20) of Chlamydomonas reinhardtii (Chlamydomonas smithii).